The chain runs to 350 residues: Solute carrier family 35 member E4 (350 aa).

8 helical membrane-spanning segments follow: residues 40-60 (VLGQ…LLAG), 79-99 (PLLL…WGAQ), 110-130 (VLLL…GLST), 135-155 (LAQL…ALLL), 218-238 (VTLL…AALV), 258-278 (VLLS…LLAL), 279-299 (TSAL…LILS), and 301-321 (LLFG…TLSG). Residues 125 to 179 (NVGLSTVPLDLAQLATTTTPLFTLALSALLLGRRHHPLQFAAMGPLCLGAACSLA) enclose the EamA domain.

The protein belongs to the TPT transporter family. SLC35E subfamily.

The protein localises to the membrane. Its function is as follows. Putative transporter. The sequence is that of Solute carrier family 35 member E4 (Slc35e4) from Rattus norvegicus (Rat).